Consider the following 154-residue polypeptide: 3-hydroxyacyl-[acyl-carrier-protein] dehydratase FabZ (154 aa).

Residue His57 is part of the active site.

Belongs to the thioester dehydratase family. FabZ subfamily.

It is found in the cytoplasm. It carries out the reaction a (3R)-hydroxyacyl-[ACP] = a (2E)-enoyl-[ACP] + H2O. Involved in unsaturated fatty acids biosynthesis. Catalyzes the dehydration of short chain beta-hydroxyacyl-ACPs and long chain saturated and unsaturated beta-hydroxyacyl-ACPs. The chain is 3-hydroxyacyl-[acyl-carrier-protein] dehydratase FabZ from Allorhizobium ampelinum (strain ATCC BAA-846 / DSM 112012 / S4) (Agrobacterium vitis (strain S4)).